The sequence spans 178 residues: Gamma-crystallin S (178 aa).

The residue at position 2 (Ser-2) is an N-acetylserine. The N-terminal arm stretch occupies residues 2–5 (SKSV). 2 consecutive Beta/gamma crystallin 'Greek key' domains span residues 6 to 44 (AKITFYDDKNFQGHHYECDSDCPDFHTYLSCCNSIRVTG) and 45 to 87 (GAWV…KVIH). Residues 88–93 (LSSGGQ) form a connecting peptide region. 2 Beta/gamma crystallin 'Greek key' domains span residues 94–134 (YKLQ…KVLD) and 135–177 (GVWV…RRIM).

It belongs to the beta/gamma-crystallin family. Monomer.

In terms of biological role, crystallins are the dominant structural components of the vertebrate eye lens. The sequence is that of Gamma-crystallin S (CRYGS) from Macropus fuliginosus (Western gray kangaroo).